A 177-amino-acid chain; its full sequence is Large ribosomal subunit protein uL6 (177 aa).

It belongs to the universal ribosomal protein uL6 family. In terms of assembly, part of the 50S ribosomal subunit.

Its function is as follows. This protein binds to the 23S rRNA, and is important in its secondary structure. It is located near the subunit interface in the base of the L7/L12 stalk, and near the tRNA binding site of the peptidyltransferase center. The protein is Large ribosomal subunit protein uL6 of Bordetella avium (strain 197N).